We begin with the raw amino-acid sequence, 86 residues long: Toxin Tpa4 (86 aa).

The first 19 residues, 1-19, serve as a signal peptide directing secretion; it reads MNYFVLIAVACLLTAGTES. The 62-residue stretch at 21–82 folds into the LCN-type CS-alpha/beta domain; the sequence is KDGYPLEYDN…EPIKTSGRCR (62 aa). 4 cysteine pairs are disulfide-bonded: Cys-31/Cys-81, Cys-35/Cys-57, Cys-43/Cys-64, and Cys-47/Cys-66. Position 83 is a proline amide (Pro-83).

This sequence belongs to the long (4 C-C) scorpion toxin superfamily. Sodium channel inhibitor family. Alpha subfamily. Expressed by the venom gland.

It localises to the secreted. Alpha toxins bind voltage-independently at site-3 of sodium channels (Nav) and inhibit the inactivation of the activated channels, thereby blocking neuronal transmission. In Tityus pachyurus (Colombian scorpion), this protein is Toxin Tpa4.